The following is a 1155-amino-acid chain: ATP-dependent helicase/deoxyribonuclease subunit B (1155 aa).

8-15 serves as a coordination point for ATP; the sequence is GRSGSGKS. Residues Cys793, Cys1115, Cys1118, and Cys1124 each coordinate [4Fe-4S] cluster.

The protein belongs to the helicase family. AddB/RexB type 1 subfamily. In terms of assembly, heterodimer of AddA and AddB. Mg(2+) serves as cofactor. The cofactor is [4Fe-4S] cluster.

In terms of biological role, the heterodimer acts as both an ATP-dependent DNA helicase and an ATP-dependent, dual-direction single-stranded exonuclease. Recognizes the chi site generating a DNA molecule suitable for the initiation of homologous recombination. The AddB subunit has 5' -&gt; 3' nuclease activity but not helicase activity. The chain is ATP-dependent helicase/deoxyribonuclease subunit B from Clostridioides difficile (strain 630) (Peptoclostridium difficile).